The primary structure comprises 284 residues: D-tagatose-1,6-bisphosphate aldolase subunit GatY (284 aa).

Asp-82 (proton donor) is an active-site residue. Residues His-83 and His-180 each contribute to the Zn(2+) site. A dihydroxyacetone phosphate-binding site is contributed by Gly-181. His-208 lines the Zn(2+) pocket. Dihydroxyacetone phosphate-binding positions include 209-211 (GAS) and 230-233 (NVAT).

The protein belongs to the class II fructose-bisphosphate aldolase family. TagBP aldolase GatY subfamily. As to quaternary structure, forms a complex with GatZ. Zn(2+) is required as a cofactor.

It catalyses the reaction D-tagatofuranose 1,6-bisphosphate = D-glyceraldehyde 3-phosphate + dihydroxyacetone phosphate. It functions in the pathway carbohydrate metabolism; D-tagatose 6-phosphate degradation; D-glyceraldehyde 3-phosphate and glycerone phosphate from D-tagatose 6-phosphate: step 2/2. Catalytic subunit of the tagatose-1,6-bisphosphate aldolase GatYZ, which catalyzes the reversible aldol condensation of dihydroxyacetone phosphate (DHAP or glycerone-phosphate) with glyceraldehyde 3-phosphate (G3P) to produce tagatose 1,6-bisphosphate (TBP). Requires GatZ subunit for full activity and stability. Is involved in the catabolism of galactitol. In Escherichia coli (strain SMS-3-5 / SECEC), this protein is D-tagatose-1,6-bisphosphate aldolase subunit GatY.